Reading from the N-terminus, the 363-residue chain is Aminopyrrolnitrin oxygenase PrnD (363 aa).

The Rieske domain maps to 29–137 (WYVAMRSNEL…TAERYGYVWV (109 aa)). Cysteine 69, histidine 71, cysteine 88, and histidine 91 together coordinate [2Fe-2S] cluster.

Homodimer. Requires [2Fe-2S] cluster as cofactor. Fe cation is required as a cofactor. The cofactor is FMN.

The catalysed reaction is aminopyrrolnitrin + NADPH + 2 O2 + H(+) = pyrrolnitrin + NADP(+) + 2 H2O. The protein operates within antibiotic biosynthesis. In terms of biological role, involved in the biosynthesis of the antifungal antibiotic pyrrolnitrin (PRN). Catalyzes the oxidation of the amino group of aminopyrrolnitrin (APRN) to a nitro group to form PRN. It has high substrate specificity toward physiological substrate aminopyrrolnitrin, p-aminobenzylamine (pABA), p-aminobenzyl alcohol, and p-aminophenyl alanine. This is Aminopyrrolnitrin oxygenase PrnD (prnD) from Pseudomonas fluorescens.